The primary structure comprises 94 residues: Acylphosphatase (94 aa).

The region spanning 8–94 is the Acylphosphatase-like domain; sequence ALHVIVKGRV…RGYTDFRIEV (87 aa). Catalysis depends on residues Arg23 and Asn41.

This sequence belongs to the acylphosphatase family.

The enzyme catalyses an acyl phosphate + H2O = a carboxylate + phosphate + H(+). This chain is Acylphosphatase (acyP), found in Treponema denticola (strain ATCC 35405 / DSM 14222 / CIP 103919 / JCM 8153 / KCTC 15104).